The chain runs to 727 residues: Phenylalanine ammonia-lyase str11 (727 aa).

Catalysis depends on Tyr105, which acts as the Proton donor/acceptor. Residues 210–212 constitute a cross-link (5-imidazolinone (Ala-Gly)); that stretch reads ASG. Ser211 bears the 2,3-didehydroalanine (Ser) mark. Asn271, Gln361, Arg367, Asn397, Lys468, Glu496, and Asn499 together coordinate (E)-cinnamate.

This sequence belongs to the PAL/histidase family. In terms of processing, contains an active site 4-methylidene-imidazol-5-one (MIO), which is formed autocatalytically by cyclization and dehydration of residues Ala-Ser-Gly.

It carries out the reaction L-phenylalanine = (E)-cinnamate + NH4(+). It functions in the pathway mycotoxin biosynthesis. In terms of biological role, phenylalanine ammonia-lyase; part of the gene cluster that mediates the biosynthesis of strobilurin A, an antifungal polyketide that contains a key beta-methoxyacrylate toxophore that targets the complex III of the mitochondrial electron transport chain. Strobilurin biosynthesis begins with construction of benzoyl CoA by step-wise elimination of ammonia from phenylalanine by the phenylalanine ammonia-lyase str11, oxygenation by str8 and retro-Claisen reaction to form benzoic acid, which is activated to its CoA thiolester benzoyl CoA by the dedicated CoA ligase str10. Benzoyl CoA forms the starter unit for the highly reducing polyketide synthase stpks1 that produces the polyketide prestrobilutin A. The FAD-dependent oxygenase str9 then catalyzes the key oxidative rearrangement responsible for the creation of the beta-methoxyacrylate toxophore. Str9 performs epoxidation of the 2,3 olefin of prestrobilutin A, followed by Meinwald rearrangement to furnish the aldehyde intermediate. Rapid enolization of the aldehyde intermediate would give the beta-methoxyacrylate skeleton and methylations catalyzed by str2 and str3 complete the synthesis and lead to the production of strobilurin A. The short-chain dehydrogenase stl2 and the dehydrogenase str4 play a role in the shunt pathway leading to the production of bolineol. The cluster encodes no obvious halogenase gene that could be involved in production of strobilurin B, nor any obvious dimethylallyl-transferase that could be involved in the production of strobilurin G. It is possible that unknown proteins encoded in, or near, the cluster (such as str1 or stl1) may form new classes of halogenases or dimethylally-transferases, or that the responsible genes are located elsewhere on the genome. Similarly, proteins encoded by str5/str6 hydrolases appear to have no chemical role in the biosynthesis of strobilurin A. Finally, no obvious self-resistance gene is found within the cluster. This chain is Phenylalanine ammonia-lyase str11, found in Strobilurus tenacellus.